The sequence spans 938 residues: MHLEHLMSSTTAVSWSKIGLIAYGDAQSQDGNLCITFLETVNGSNWRFHPPKKYVIHPQLHEDQSSNGNPKSPLFFHDLRSMHWNNWGLLNGELLAVCDELGNMTVLAAGQGLNGNGAYDRLSVLFQDNIFKIHNQVLPLESVPKKDATPKVERKHTKKEYYSTILDFQWIGNQKPSVAQVAAQRDRTNNIFKNQMHQCPPYGVFHPASIKSACIAIRRNGYIDLWYQFSNTLDFKKISLQLSKDKESEWLQYAQIAHTDKEQCFLIGVFSNVAKSFAFYELLINWNVNTTNQAMFHDPKLTLRHILRVRPDALGPNGELLKLENFHVISKTALPGTRPEILISYNILGTERSLVRRFQMVLSNPDMVFLSSLGLAITALHNNHSVLRYSMKHVQDLTFDSKIMDIQSHSLDALVCFRLHNGRFQLYNRHTWAVESETADAKQIGGYTKDTIISIFGSGFNYPLLPPADAIEWCAISPSSGGIILKLKCKPQPTFYALEQSVLTDPSRDIVHATAFAFEFVRFNNMIHSGEDLAIAAKTHVFRLQRLSEERAVNFIASVIGAILSLYGIHFDGPKEILEKLLQSKAIQKIFLLQMELGSHLKNKNVYSMAYASMKLRSINLAMNGVARNVHAMIQHTAVVNSLPNGRAFQFAFSKQDLIYSLIPSVNWFVSFVTFLTQQLIMLVNNPMDNTHSLVLGILSCITTRHLMLKVILELKNMIGLITKFPETTYTVLNESSRFLRKALGDSPVNLEKFEVFLNEINNKFLSLLDDHGAQSMDREPSFMVKAEIPPALGHVREFLLSFAGSALLAQTNLAEVFFASTHNLRIFDHQHFHPSVANLLQPPEKGLVVDDAILPDACRGSSSFSPLDYDDISSEWVDMSALVRIKRCVRCGCVTRAGNPVAKNNTILETSIVTKRWTALYSRYCQCTGLLYELDTP.

Belongs to the Mediator complex subunit 16 family. Component of the Mediator complex.

The protein resides in the nucleus. In terms of biological role, component of the Mediator complex, a coactivator involved in the regulated transcription of nearly all RNA polymerase II-dependent genes. Mediator functions as a bridge to convey information from gene-specific regulatory proteins to the basal RNA polymerase II transcription machinery. Mediator is recruited to promoters by direct interactions with regulatory proteins and serves as a scaffold for the assembly of a functional preinitiation complex with RNA polymerase II and the general transcription factors. This Eremothecium gossypii (strain ATCC 10895 / CBS 109.51 / FGSC 9923 / NRRL Y-1056) (Yeast) protein is Mediator of RNA polymerase II transcription subunit 16 (SIN4).